The following is a 412-amino-acid chain: Putative competence-damage inducible protein (412 aa).

It belongs to the CinA family.

This is Putative competence-damage inducible protein from Caldanaerobacter subterraneus subsp. tengcongensis (strain DSM 15242 / JCM 11007 / NBRC 100824 / MB4) (Thermoanaerobacter tengcongensis).